Consider the following 95-residue polypeptide: PIK3R3 upstream open reading frame protein (95 aa).

The disordered stretch occupies residues Met1 to Pro27.

This Homo sapiens (Human) protein is PIK3R3 upstream open reading frame protein.